The primary structure comprises 175 residues: Protein her-1 (175 aa).

The signal sequence occupies residues 1 to 18 (MRYLPIFVFLGSFGYTET). 2 N-linked (GlcNAc...) asparagine glycosylation sites follow: Asn98 and Asn163.

The protein resides in the secreted. Functionally, dictates male development. Probably plays a direct role in cell signaling during C.elegans sex determination. Inhibits the function of tra-2a. The sequence is that of Protein her-1 (her-1) from Caenorhabditis elegans.